A 551-amino-acid polypeptide reads, in one-letter code: Trehalose-6-phosphate hydrolase (551 aa).

Residue Asp200 is the Nucleophile of the active site. The active-site Proton donor is Glu251.

Belongs to the glycosyl hydrolase 13 family.

The protein localises to the cytoplasm. The catalysed reaction is alpha,alpha-trehalose 6-phosphate + H2O = D-glucose 6-phosphate + D-glucose. Hydrolyzes trehalose-6-phosphate to glucose and glucose 6-phosphate. Can also very effectively hydrolyze p-nitrophenyl-alpha-D-glucopyranoside, but it does not recognize trehalose, sucrose, maltose, isomaltose, or maltodextrins. This Escherichia coli (strain K12) protein is Trehalose-6-phosphate hydrolase (treC).